Consider the following 277-residue polypeptide: MKLCGFDVGIDQPLFLIAGPCVIESEQLAIETAGQLKELTDALGIPFIYKSSYDKANRSSTKSFRGLGVEEGLRILQKVKDEIGVPVLTDVHEDTPLDEVASVVDVMQTPAFLVRQTNFIQNVCRQGLPVNIKKGQFQAPWDMDQVVAKAREVGNDQIMVCDRGTSFGYNTLISDMRGLASMRQTGCPVVFDATHSVQQPGGQGTTSGGQREMVPVLARAAIAAGISGVFMETHPDPENALSDGPNMWPISRLKPLLETMKELDEVVKRHGFIEDQS.

This sequence belongs to the KdsA family.

The protein localises to the cytoplasm. It carries out the reaction D-arabinose 5-phosphate + phosphoenolpyruvate + H2O = 3-deoxy-alpha-D-manno-2-octulosonate-8-phosphate + phosphate. It participates in carbohydrate biosynthesis; 3-deoxy-D-manno-octulosonate biosynthesis; 3-deoxy-D-manno-octulosonate from D-ribulose 5-phosphate: step 2/3. Its pathway is bacterial outer membrane biogenesis; lipopolysaccharide biosynthesis. The polypeptide is 2-dehydro-3-deoxyphosphooctonate aldolase (Hydrogenovibrio crunogenus (strain DSM 25203 / XCL-2) (Thiomicrospira crunogena)).